The primary structure comprises 222 residues: Ribosomal RNA small subunit methyltransferase G (222 aa).

S-adenosyl-L-methionine contacts are provided by residues Gly-82, Leu-87, 132 to 133 (AE), and Arg-150.

This sequence belongs to the methyltransferase superfamily. RNA methyltransferase RsmG family.

Its subcellular location is the cytoplasm. In terms of biological role, specifically methylates the N7 position of guanine in position 518 of 16S rRNA. In Corynebacterium jeikeium (strain K411), this protein is Ribosomal RNA small subunit methyltransferase G.